Reading from the N-terminus, the 441-residue chain is Importin subunit alpha-8 (441 aa).

8 ARM repeats span residues 39 to 79 (QRDI…NIAV), 80 to 118 (DNPG…NVAG), 121 to 158 (IHYR…NLCR), 160 to 199 (KPHP…HLSE), 202 to 241 (EDGI…AMTA), 244 to 284 (HQQT…NITA), 287 to 326 (KEQI…NMAL), and 330 to 370 (HDQI…NMLK).

Belongs to the importin alpha family. As to quaternary structure, forms a complex with importin subunit beta-1.

The protein resides in the nucleus envelope. In terms of biological role, binds to conventional NLS motifs and mediates nuclear protein import across the nuclear envelope. This is Importin subunit alpha-8 from Arabidopsis thaliana (Mouse-ear cress).